The following is a 508-amino-acid chain: Cytochrome P450 4A12B (508 aa).

The N-terminal stretch at 1 to 37 (MSASALSSIRFPGSISEYLQVASVLSLLLLLFKTAQL) is a signal peptide. Heme is bound by residues Glu-319 and Cys-455.

It belongs to the cytochrome P450 family. Requires heme as cofactor. As to expression, expressed in lung, but almost undetectable in the kidneys of five different strains.

The protein resides in the endoplasmic reticulum membrane. The protein localises to the microsome membrane. It carries out the reaction an organic molecule + reduced [NADPH--hemoprotein reductase] + O2 = an alcohol + oxidized [NADPH--hemoprotein reductase] + H2O + H(+). The enzyme catalyses dodecanoate + reduced [NADPH--hemoprotein reductase] + O2 = 11-hydroxydodecanoate + oxidized [NADPH--hemoprotein reductase] + H2O + H(+). The catalysed reaction is dodecanoate + reduced [NADPH--hemoprotein reductase] + O2 = 12-hydroxydodecanoate + oxidized [NADPH--hemoprotein reductase] + H2O + H(+). It catalyses the reaction (5Z,8Z,11Z,14Z)-eicosatetraenoate + reduced [NADPH--hemoprotein reductase] + O2 = 18-hydroxy-(5Z,8Z,11Z,14Z)-eicosatetraenoate + oxidized [NADPH--hemoprotein reductase] + H2O + H(+). It carries out the reaction (5Z,8Z,11Z,14Z)-eicosatetraenoate + reduced [NADPH--hemoprotein reductase] + O2 = 19-hydroxy-(5Z,8Z,11Z,14Z)-eicosatetraenoate + oxidized [NADPH--hemoprotein reductase] + H2O + H(+). The enzyme catalyses (5Z,8Z,11Z,14Z)-eicosatetraenoate + reduced [NADPH--hemoprotein reductase] + O2 = 20-hydroxy-(5Z,8Z,11Z,14Z)-eicosatetraenoate + oxidized [NADPH--hemoprotein reductase] + H2O + H(+). The catalysed reaction is (5Z,8Z,11Z,14Z,17Z)-eicosapentaenoate + reduced [NADPH--hemoprotein reductase] + O2 = 19-hydroxy-(5Z,8Z,11Z,14Z,17Z)-eicosapentaenoate + oxidized [NADPH--hemoprotein reductase] + H2O + H(+). It catalyses the reaction (5Z,8Z,11Z,14Z,17Z)-eicosapentaenoate + reduced [NADPH--hemoprotein reductase] + O2 = 20-hydroxy-(5Z,8Z,11Z,14Z,17Z)-eicosapentaenoate + oxidized [NADPH--hemoprotein reductase] + H2O + H(+). It carries out the reaction (5Z,8Z,11Z,14Z,17Z)-eicosapentaenoate + reduced [NADPH--hemoprotein reductase] + O2 = (17S,18R)-epoxy-(5Z,8Z,11Z,14Z)-eicosatetraenoate + oxidized [NADPH--hemoprotein reductase] + H2O + H(+). The enzyme catalyses (5Z,8Z,11Z,14Z,17Z)-eicosapentaenoate + reduced [NADPH--hemoprotein reductase] + O2 = (17R,18S)-epoxy-(5Z,8Z,11Z,14Z)-eicosatetraenoate + oxidized [NADPH--hemoprotein reductase] + H2O + H(+). The protein operates within lipid metabolism; fatty acid metabolism. Activated by cytochrome b5. The Vmax almost doubles in the presence of cytochrome b5. In terms of biological role, a cytochrome P450 monooxygenase involved in the metabolism of fatty acids and their oxygenated derivatives (oxylipins). Mechanistically, uses molecular oxygen inserting one oxygen atom into a substrate, and reducing the second into a water molecule, with two electrons provided by NADPH via cytochrome P450 reductase (CPR; NADPH-ferrihemoprotein reductase). Catalyzes predominantly the oxidation of the terminal carbon (omega-oxidation) of saturated and unsaturated fatty acids. May act as a major omega-hydroxylase for dodecanoic (lauric) acid in kidney. Participates in omega-hydroxylation of (5Z,8Z,11Z,14Z)-eicosatetraenoic acid (arachidonate) to 20-hydroxyeicosatetraenoic acid (20-HETE), a signaling molecule acting both as vasoconstrictive and natriuretic with overall effect on arterial blood pressure. Acts as an omega-hydroxylase and epoxidase toward (5Z,8Z,11Z,14Z,17Z)-eicosapentaenoc acid (EPA). Catalyzes the epoxidation of the last double bond of EPA with no preferred stereoselectivity, producing both (R,S) and (S,R) stereoisomers. Can also catalyze the omega-1 and omega-2 oxidation of fatty acids with lower efficiency. This is Cytochrome P450 4A12B from Mus musculus (Mouse).